The chain runs to 343 residues: NADH-ubiquinone oxidoreductase chain 1 (343 aa).

8 helical membrane-spanning segments follow: residues 4 to 24 (LISI…VAFL), 70 to 90 (ANII…LLGY), 106 to 126 (LGIL…LLAG), 154 to 174 (FYIL…IIES), 177 to 197 (VVYF…GCIA), 224 to 244 (VIFM…ICIL), 278 to 298 (GLSS…FIWV), and 316 to 336 (TILL…VIGL).

It belongs to the complex I subunit 1 family.

Its subcellular location is the mitochondrion inner membrane. The enzyme catalyses a ubiquinone + NADH + 5 H(+)(in) = a ubiquinol + NAD(+) + 4 H(+)(out). Functionally, core subunit of the mitochondrial membrane respiratory chain NADH dehydrogenase (Complex I) that is believed to belong to the minimal assembly required for catalysis. Complex I functions in the transfer of electrons from NADH to the respiratory chain. The immediate electron acceptor for the enzyme is believed to be ubiquinone. The polypeptide is NADH-ubiquinone oxidoreductase chain 1 (ND1) (Trichophyton rubrum (Athlete's foot fungus)).